We begin with the raw amino-acid sequence, 949 residues long: Glycine dehydrogenase (decarboxylating) (949 aa).

At lysine 700 the chain carries N6-(pyridoxal phosphate)lysine.

This sequence belongs to the GcvP family. As to quaternary structure, the glycine cleavage system is composed of four proteins: P, T, L and H. Pyridoxal 5'-phosphate serves as cofactor.

It carries out the reaction N(6)-[(R)-lipoyl]-L-lysyl-[glycine-cleavage complex H protein] + glycine + H(+) = N(6)-[(R)-S(8)-aminomethyldihydrolipoyl]-L-lysyl-[glycine-cleavage complex H protein] + CO2. Functionally, the glycine cleavage system catalyzes the degradation of glycine. The P protein binds the alpha-amino group of glycine through its pyridoxal phosphate cofactor; CO(2) is released and the remaining methylamine moiety is then transferred to the lipoamide cofactor of the H protein. This chain is Glycine dehydrogenase (decarboxylating), found in Flavobacterium johnsoniae (strain ATCC 17061 / DSM 2064 / JCM 8514 / BCRC 14874 / CCUG 350202 / NBRC 14942 / NCIMB 11054 / UW101) (Cytophaga johnsonae).